Reading from the N-terminus, the 618-residue chain is Sodium/iodide cotransporter (618 aa).

Over 1–14 (MEGAEAGARATFGA) the chain is Extracellular. Residues 15-31 (WDYGVFATMLLVSTGIG) form a helical membrane-spanning segment. Residues 32–56 (LWVGLARGGQRSADDFFTGGRQLAA) lie on the Cytoplasmic side of the membrane. A discontinuously helical membrane pass occupies residues 57-80 (VPVGLSLAASFMSAVQVLGVPAEA). Serine 69, valine 71, and glutamine 72 together coordinate Na(+). Valine 76 is a binding site for iodide. At 81-84 (ARYG) the chain is on the extracellular side. The chain crosses the membrane as a helical span at residues 85–105 (LKFLWMCAGQLLNSLLTAFLF). Methionine 90 provides a ligand contact to iodide. Residues 106–130 (LPIFYRLGLTSTYQYLELRFSRAVR) lie on the Cytoplasmic side of the membrane. The helical transmembrane segment at 131–157 (LCGTLQYLVATMLYTGIVIYAPALILN) threads the bilayer. Tyrosine 144 is a binding site for Na(+). At 158–163 (QVTGLD) the chain is on the extracellular side. Residues 164-181 (IWASLLSTGIICTLYTTV) form a helical membrane-spanning segment. Over 182 to 189 (GGMKAVVW) the chain is Cytoplasmic. The chain crosses the membrane as a helical span at residues 190-208 (TDVFQVVVMLVGFWVILAR). The Extracellular segment spans residues 209–243 (GVILLGGPRNVLSLAQNHSRINLMDFDPDPRSRYT). A discontinuously helical transmembrane segment spans residues 244–266 (FWTFIVGGTLVWLSMYGVNQAQV). Residue tryptophan 255 participates in iodide binding. Methionine 258 serves as a coordination point for Na(+). The Cytoplasmic segment spans residues 267–278 (QRYVACHTEGKA). The chain crosses the membrane as a helical span at residues 279–301 (KLALLVNQLGLFLIVASAACCGI). At 302–335 (VMFVYYKDCDPLLTGRISAPDQYMPLLVLDIFED) the chain is on the extracellular side. Residues 336 to 363 (LPGVPGLFLACAYSGTLSTASTSINAMA) traverse the membrane as a helical segment. Residues 364-386 (AVTVEDLIKPRMPGLAPRKLVFI) are Cytoplasmic-facing. A helical transmembrane segment spans residues 387–408 (SKGLSFIYGSACLTVAALSSLL). The Extracellular portion of the chain corresponds to 409–411 (GGG). Residues 412 to 437 (VLQGSFTVMGVISGPLLGAFTLGMLL) traverse the membrane as a helical segment. Leucine 413 is an iodide binding site. 2 residues coordinate Na(+): serine 416 and phenylalanine 417. Phenylalanine 417 lines the iodide pocket. The Cytoplasmic segment spans residues 438 to 441 (PACN). The helical transmembrane segment at 442-465 (TPGVLSGLAAGLAVSLWVAVGATL) threads the bilayer. The Extracellular segment spans residues 466 to 520 (YPPGEQTMGVLPTSAAGCTNDSVLLGPPGATNASNGIPSSGMDTGRPALADTFYA). N-linked (GlcNAc...) asparagine glycans are attached at residues asparagine 485 and asparagine 497. Residues 521-545 (ISYLYYGALGTLTTMLCGALISYLT) form a helical membrane-spanning segment. Topologically, residues 546–618 (GPTKRSSLGP…YLGHDVETNL (73 aa)) are cytoplasmic. Serine 551 bears the Phosphoserine; by PKA mark. The disordered stretch occupies residues 587 to 618 (EDIPAVTKKPPGLKPGAETHPLYLGHDVETNL).

Belongs to the sodium:solute symporter (SSF) (TC 2.A.21) family. In terms of assembly, monomer.

The protein resides in the cell membrane. It localises to the cytoplasm. It catalyses the reaction iodide(out) + 2 Na(+)(out) = iodide(in) + 2 Na(+)(in). The enzyme catalyses chlorate(out) + 2 Na(+)(out) = chlorate(in) + 2 Na(+)(in). It carries out the reaction thiocyanate(out) + 2 Na(+)(out) = thiocyanate(in) + 2 Na(+)(in). The catalysed reaction is nitrate(out) + 2 Na(+)(out) = nitrate(in) + 2 Na(+)(in). It catalyses the reaction selenocyanate(out) + 2 Na(+)(out) = selenocyanate(in) + 2 Na(+)(in). Its activity is regulated as follows. Perchlorate inhibits iodide transport activity. Oxyanions inhibit iodide transport activity by blocking the binding sites for iodide and one of the sodium ions. Sodium:iodide symporter that mediates the transport of iodide into the thyroid gland. Can also mediate the transport of chlorate, thiocynate, nitrate and selenocynate. The protein is Sodium/iodide cotransporter (Slc5a5) of Rattus norvegicus (Rat).